We begin with the raw amino-acid sequence, 73 residues long: Translation initiation factor IF-1 (73 aa).

The region spanning M1–K73 is the S1-like domain.

Belongs to the IF-1 family. In terms of assembly, component of the 30S ribosomal translation pre-initiation complex which assembles on the 30S ribosome in the order IF-2 and IF-3, IF-1 and N-formylmethionyl-tRNA(fMet); mRNA recruitment can occur at any time during PIC assembly.

The protein resides in the cytoplasm. Functionally, one of the essential components for the initiation of protein synthesis. Stabilizes the binding of IF-2 and IF-3 on the 30S subunit to which N-formylmethionyl-tRNA(fMet) subsequently binds. Helps modulate mRNA selection, yielding the 30S pre-initiation complex (PIC). Upon addition of the 50S ribosomal subunit IF-1, IF-2 and IF-3 are released leaving the mature 70S translation initiation complex. This chain is Translation initiation factor IF-1, found in Thermobifida fusca (strain YX).